Reading from the N-terminus, the 91-residue chain is Acylphosphatase (91 aa).

An Acylphosphatase-like domain is found at 3-89; that stretch reads TLLVRISGKV…PDQPGFSQKP (87 aa). Residues arginine 18 and asparagine 36 contribute to the active site.

Belongs to the acylphosphatase family.

It carries out the reaction an acyl phosphate + H2O = a carboxylate + phosphate + H(+). The sequence is that of Acylphosphatase (acyP) from Rhodospirillum rubrum (strain ATCC 11170 / ATH 1.1.1 / DSM 467 / LMG 4362 / NCIMB 8255 / S1).